The primary structure comprises 251 residues: Triosephosphate isomerase (251 aa).

Position 9–11 (9–11 (NWK)) interacts with substrate. Histidine 94 serves as the catalytic Electrophile. The Proton acceptor role is filled by glutamate 163. Residues glycine 169, serine 209, and 230–231 (GG) each bind substrate.

This sequence belongs to the triosephosphate isomerase family. Homodimer.

Its subcellular location is the cytoplasm. It carries out the reaction D-glyceraldehyde 3-phosphate = dihydroxyacetone phosphate. It participates in carbohydrate biosynthesis; gluconeogenesis. It functions in the pathway carbohydrate degradation; glycolysis; D-glyceraldehyde 3-phosphate from glycerone phosphate: step 1/1. Its function is as follows. Involved in the gluconeogenesis. Catalyzes stereospecifically the conversion of dihydroxyacetone phosphate (DHAP) to D-glyceraldehyde-3-phosphate (G3P). The polypeptide is Triosephosphate isomerase (Dehalococcoides mccartyi (strain ATCC BAA-2266 / KCTC 15142 / 195) (Dehalococcoides ethenogenes (strain 195))).